Here is a 247-residue protein sequence, read N- to C-terminus: NH(3)-dependent NAD(+) synthetase (247 aa).

29–36 (GISGGIDS) serves as a coordination point for ATP. Aspartate 35 lines the Mg(2+) pocket. Residue arginine 120 coordinates deamido-NAD(+). Threonine 140 serves as a coordination point for ATP. Position 145 (glutamate 145) interacts with Mg(2+). Deamido-NAD(+) contacts are provided by lysine 153 and aspartate 160. ATP contacts are provided by lysine 169 and serine 191. 237 to 238 (HK) is a binding site for deamido-NAD(+).

It belongs to the NAD synthetase family. Homodimer.

The catalysed reaction is deamido-NAD(+) + NH4(+) + ATP = AMP + diphosphate + NAD(+) + H(+). The protein operates within cofactor biosynthesis; NAD(+) biosynthesis; NAD(+) from deamido-NAD(+) (ammonia route): step 1/1. Its function is as follows. Catalyzes the ATP-dependent amidation of deamido-NAD to form NAD. Uses ammonia as a nitrogen source. The protein is NH(3)-dependent NAD(+) synthetase of Alkaliphilus metalliredigens (strain QYMF).